The primary structure comprises 184 residues: Ribulose bisphosphate carboxylase small subunit, chloroplastic 2 (184 aa).

Residues 1 to 59 (MASSMMSNAATAVAVAATSGGAQANMVAPFNGLKSIASFPVTRKSNDITSIASNGGRVQ) constitute a chloroplast transit peptide.

This sequence belongs to the RuBisCO small chain family. In terms of assembly, heterohexadecamer of 8 large and 8 small subunits.

It localises to the plastid. Its subcellular location is the chloroplast. Functionally, ruBisCO catalyzes two reactions: the carboxylation of D-ribulose 1,5-bisphosphate, the primary event in carbon dioxide fixation, as well as the oxidative fragmentation of the pentose substrate. Both reactions occur simultaneously and in competition at the same active site. Although the small subunit is not catalytic it is essential for maximal activity. The sequence is that of Ribulose bisphosphate carboxylase small subunit, chloroplastic 2 from Amaranthus hypochondriacus (Prince-of-Wales feather).